The following is a 29-amino-acid chain: Glucagon (29 aa).

This sequence belongs to the glucagon family.

Its subcellular location is the secreted. Functionally, promotes hydrolysis of glycogen and lipids, and raises the blood sugar level. This Torpedo marmorata (Marbled electric ray) protein is Glucagon (gcg).